The primary structure comprises 748 residues: Translation factor GUF1 homolog 1, mitochondrial (748 aa).

A mitochondrion-targeting transit peptide spans 1-29 (MRVGCCLLLKPIRQRLCTASISSRHIMRW). Positions 94 to 276 (SHIRNFAVVA…AIIERVPPPT (183 aa)) constitute a tr-type G domain. GTP is bound by residues 103 to 110 (AHVDHGKT), 167 to 171 (DTPGH), and 221 to 224 (TKMD).

Belongs to the TRAFAC class translation factor GTPase superfamily. Classic translation factor GTPase family. LepA subfamily.

The protein localises to the mitochondrion inner membrane. It catalyses the reaction GTP + H2O = GDP + phosphate + H(+). Its function is as follows. Promotes mitochondrial protein synthesis. May act as a fidelity factor of the translation reaction, by catalyzing a one-codon backward translocation of tRNAs on improperly translocated ribosomes. Binds to mitochondrial ribosomes in a GTP-dependent manner. The polypeptide is Translation factor GUF1 homolog 1, mitochondrial (Trypanosoma cruzi (strain CL Brener)).